The primary structure comprises 767 residues: General transcription and DNA repair factor IIH helicase/translocase subunit XPB1 (767 aa).

The disordered stretch occupies residues 1–51; it reads MGNGERGRPNKKMKYGGKDDQKMKNIQNAEDYYDDADEDSRDGEGEEKKRD. Residues 31–41 are compositionally biased toward acidic residues; that stretch reads DYYDDADEDSR. Residues 42–51 are compositionally biased toward basic and acidic residues; it reads DGEGEEKKRD. The Helicase ATP-binding domain maps to 293 to 455; sequence MFGNGRARSG…DLNFLIGPKL (163 aa). 306–313 is a binding site for ATP; the sequence is LPCGAGKS. Residues 408–411 carry the DEVH box motif; it reads DEVH. In terms of domain architecture, Helicase C-terminal spans 510–676; that stretch reads RACEFLIRFH…SLPPPDAGSS (167 aa). The segment at 742–767 is disordered; it reads RHKSGQQFKKPKDPTKRHNLFKKRYV. The short motif at 750–766 is the Nuclear localization signal element; the sequence is KKPKDPTKRHNLFKKRY. Over residues 758 to 767 the composition is skewed to basic residues; that stretch reads RHNLFKKRYV.

It belongs to the helicase family. RAD25/XPB subfamily. In terms of assembly, component of the 7-subunit TFIIH core complex composed of XPB, XPD, TFB1/GTF2H1, GTF2H2/P44, TFB4/GTF2H3, TFB2/GTF2H4 and TFB5/GTF2H5, which is active in NER. The core complex associates with the 3-subunit CDK-activating kinase (CAK) module composed of CYCH1/cyclin H1, CDKD and MAT1/At4g30820 to form the 10-subunit holoenzyme (holo-TFIIH) active in transcription. In terms of tissue distribution, expressed ubiquitously.

The protein localises to the nucleus. The catalysed reaction is Couples ATP hydrolysis with the unwinding of duplex DNA by translocating in the 3'-5' direction.. It carries out the reaction ATP + H2O = ADP + phosphate + H(+). ATP-dependent 3'-5' DNA helicase/translocase; binds dsDNA rather than ssDNA, unzipping it in a translocase rather than classical helicase activity. Component of the general transcription and DNA repair factor IIH (TFIIH) core complex. When complexed to CDK-activating kinase (CAK), involved in RNA transcription by RNA polymerase II. The ATPase activity of XPB/ERCC3, but not its helicase activity, is required for DNA opening; it may wrap around the damaged DNA wedging it open, causing localized melting and twisting that allows XPD/ERCC2 helicase to anchor. The ATP-dependent helicase activity of XPB/ERCC3 may be required for promoter escape. Also involved in transcription-coupled nucleotide excision repair (NER) of damaged DNA. In NER, TFIIH acts by opening DNA around the lesion to allow the excision of the damaged oligonucleotide and its replacement by a new DNA fragment. The structure of the TFIIH transcription complex differs from the NER-TFIIH complex. Partially complements UV sensitivity of a yeast SSL2 mutation. Required during the early stages of development, including seed germination. The protein is General transcription and DNA repair factor IIH helicase/translocase subunit XPB1 (XPB1) of Arabidopsis thaliana (Mouse-ear cress).